Reading from the N-terminus, the 195-residue chain is Probable GTP-binding protein EngB (195 aa).

The EngB-type G domain maps to 22–194 (LKGEVAFVGR…LDLISTLLKE (173 aa)). GTP is bound by residues 30–37 (GRSNVGKS), 56–60 (GKTRS), 74–77 (DLPG), 141–144 (TKMD), and 173–175 (TSS). 2 residues coordinate Mg(2+): serine 37 and threonine 58.

It belongs to the TRAFAC class TrmE-Era-EngA-EngB-Septin-like GTPase superfamily. EngB GTPase family. Mg(2+) serves as cofactor.

Its function is as follows. Necessary for normal cell division and for the maintenance of normal septation. The protein is Probable GTP-binding protein EngB of Thermotoga maritima (strain ATCC 43589 / DSM 3109 / JCM 10099 / NBRC 100826 / MSB8).